We begin with the raw amino-acid sequence, 467 residues long: ATP synthase subunit beta (467 aa).

Glycine 150–threonine 157 lines the ATP pocket.

This sequence belongs to the ATPase alpha/beta chains family. As to quaternary structure, F-type ATPases have 2 components, CF(1) - the catalytic core - and CF(0) - the membrane proton channel. CF(1) has five subunits: alpha(3), beta(3), gamma(1), delta(1), epsilon(1). CF(0) has three main subunits: a(1), b(2) and c(9-12). The alpha and beta chains form an alternating ring which encloses part of the gamma chain. CF(1) is attached to CF(0) by a central stalk formed by the gamma and epsilon chains, while a peripheral stalk is formed by the delta and b chains.

Its subcellular location is the cell inner membrane. It catalyses the reaction ATP + H2O + 4 H(+)(in) = ADP + phosphate + 5 H(+)(out). Produces ATP from ADP in the presence of a proton gradient across the membrane. The catalytic sites are hosted primarily by the beta subunits. The sequence is that of ATP synthase subunit beta from Polaromonas sp. (strain JS666 / ATCC BAA-500).